We begin with the raw amino-acid sequence, 180 residues long: Large ribosomal subunit protein uL5c (180 aa).

Belongs to the universal ribosomal protein uL5 family. Part of the 50S ribosomal subunit; contacts the 5S rRNA.

The protein resides in the plastid. The protein localises to the chloroplast. Functionally, binds 5S rRNA, forms part of the central protuberance of the 50S subunit. This chain is Large ribosomal subunit protein uL5c (rpl5), found in Stigeoclonium helveticum (Green alga).